Reading from the N-terminus, the 391-residue chain is Digeranylgeranylglycerophospholipid reductase (391 aa).

Residues glycine 13, glutamate 32, cysteine 43, alanine 44, glycine 46, arginine 97, alanine 121, aspartate 277, glycine 289, and isoleucine 290 each coordinate FAD.

The protein belongs to the geranylgeranyl reductase family. DGGGPL reductase subfamily. FAD is required as a cofactor.

The enzyme catalyses a 2,3-bis-O-phytanyl-sn-glycerol 1-phospholipid + 8 oxidized 2[4Fe-4S]-[ferredoxin] = a 2,3-bis-O-(geranylgeranyl)-sn-glycerol 1-phospholipid + 8 reduced 2[4Fe-4S]-[ferredoxin] + 16 H(+). It catalyses the reaction 2,3-bis-O-(phytanyl)-sn-glycerol 1-phosphate + 8 oxidized 2[4Fe-4S]-[ferredoxin] = 2,3-bis-O-(geranylgeranyl)-sn-glycerol 1-phosphate + 8 reduced 2[4Fe-4S]-[ferredoxin] + 16 H(+). The catalysed reaction is a 2,3-bis-O-phytanyl-sn-glycerol 1-phospholipid + 8 A = a 2,3-bis-O-(geranylgeranyl)-sn-glycerol 1-phospholipid + 8 AH2. It carries out the reaction CDP-2,3-bis-O-(geranylgeranyl)-sn-glycerol + 8 AH2 = CDP-2,3-bis-O-(phytanyl)-sn-glycerol + 8 A. The enzyme catalyses archaetidylserine + 8 AH2 = 2,3-bis-O-phytanyl-sn-glycero-3-phospho-L-serine + 8 A. Its pathway is membrane lipid metabolism; glycerophospholipid metabolism. Functionally, is involved in the reduction of 2,3-digeranylgeranylglycerophospholipids (unsaturated archaeols) into 2,3-diphytanylglycerophospholipids (saturated archaeols) in the biosynthesis of archaeal membrane lipids. Catalyzes the formation of archaetidic acid (2,3-di-O-phytanyl-sn-glyceryl phosphate) from 2,3-di-O-geranylgeranylglyceryl phosphate (DGGGP) via the hydrogenation of each double bond of the isoprenoid chains. Is also probably able to reduce double bonds of geranyl groups in CDP-2,3-bis-O-(geranylgeranyl)-sn-glycerol and archaetidylserine, thus acting at various stages in the biosynthesis of archaeal membrane lipids. This is Digeranylgeranylglycerophospholipid reductase from Methanothrix thermoacetophila (strain DSM 6194 / JCM 14653 / NBRC 101360 / PT) (Methanosaeta thermophila).